The primary structure comprises 267 residues: Large ribosomal subunit protein uL4 (267 aa).

The protein belongs to the universal ribosomal protein uL4 family. As to quaternary structure, part of the 50S ribosomal subunit.

In terms of biological role, one of the primary rRNA binding proteins, this protein initially binds near the 5'-end of the 23S rRNA. It is important during the early stages of 50S assembly. It makes multiple contacts with different domains of the 23S rRNA in the assembled 50S subunit and ribosome. Its function is as follows. Forms part of the polypeptide exit tunnel. This chain is Large ribosomal subunit protein uL4, found in Saccharolobus islandicus (strain M.16.27) (Sulfolobus islandicus).